The primary structure comprises 102 residues: Cytochrome c (102 aa).

Residue Gly-1 is modified to N-acetylglycine. The span at Gly-1–Glu-11 shows a compositional bias: basic and acidic residues. The tract at residues Gly-1–Ser-26 is disordered. The heme c site is built by Cys-17, His-18, and Met-79. Residues Cys-17–Ser-26 are compositionally biased toward polar residues. Lys-85 is subject to N6,N6,N6-trimethyllysine.

This sequence belongs to the cytochrome c family. Binds 1 heme c group covalently per subunit.

The protein resides in the mitochondrion intermembrane space. Its function is as follows. Electron carrier protein. The oxidized form of the cytochrome c heme group can accept an electron from the heme group of the cytochrome c1 subunit of cytochrome reductase. Cytochrome c then transfers this electron to the cytochrome oxidase complex, the final protein carrier in the mitochondrial electron-transport chain. The polypeptide is Cytochrome c (Euglena viridis (Cercaria viridis)).